The following is a 171-amino-acid chain: Small ribosomal subunit protein uS5 (171 aa).

The S5 DRBM domain occupies 14–77 (YIEKLVNIRR…DKARKAMKNV (64 aa)).

This sequence belongs to the universal ribosomal protein uS5 family. In terms of assembly, part of the 30S ribosomal subunit. Contacts proteins S4 and S8.

Functionally, with S4 and S12 plays an important role in translational accuracy. Its function is as follows. Located at the back of the 30S subunit body where it stabilizes the conformation of the head with respect to the body. In Vesicomyosocius okutanii subsp. Calyptogena okutanii (strain HA), this protein is Small ribosomal subunit protein uS5.